We begin with the raw amino-acid sequence, 329 residues long: Sialic acid-binding periplasmic protein SiaP (329 aa).

Positions M1 to A23 are cleaved as a signal peptide. Residues N33, D72, E90, R150, R170, and N210 each coordinate N-acetyl-beta-neuraminate.

It belongs to the bacterial solute-binding protein 7 family. As to quaternary structure, the complex comprises the extracytoplasmic solute receptor protein SiaP, and the fused transmembrane protein SiaT.

Its subcellular location is the periplasm. Functionally, part of the tripartite ATP-independent periplasmic (TRAP) transport system SiaPT involved in the uptake of sialic acid (N-acetyl-beta-neuraminate). This protein specifically binds sialic acid with high affinity. N-Acetylneuraminate (sialic acid) can then be incorporated into the lipooligosaccharides (LOS) as a terminal non-reducing sugar, protecting the bacterium from complement-mediated killing by normal human serum. This chain is Sialic acid-binding periplasmic protein SiaP (siaP), found in Haemophilus influenzae (strain ATCC 51907 / DSM 11121 / KW20 / Rd).